We begin with the raw amino-acid sequence, 75 residues long: UPF0352 protein KPN78578_25810 (75 aa).

The protein belongs to the UPF0352 family.

The protein is UPF0352 protein KPN78578_25810 of Klebsiella pneumoniae subsp. pneumoniae (strain ATCC 700721 / MGH 78578).